The sequence spans 292 residues: Probable alpha-L-glutamate ligase (292 aa).

The ATP-grasp domain occupies 104–287 (HQLLAAKGID…VATRIIEHVE (184 aa)). ATP contacts are provided by residues Lys-141, 178–179 (EF), Asp-187, and 211–213 (RSN). Mg(2+) is bound by residues Asp-248, Glu-260, and Asn-262. Mn(2+)-binding residues include Asp-248, Glu-260, and Asn-262.

Belongs to the RimK family. Requires Mg(2+) as cofactor. The cofactor is Mn(2+).

This is Probable alpha-L-glutamate ligase from Stenotrophomonas maltophilia (strain K279a).